The chain runs to 495 residues: Cytochrome P450 monooxygenase aneF (495 aa).

The helical transmembrane segment at 1 to 21 (MIAGLVLVVLLTKYLQRVFLH) threads the bilayer. N-linked (GlcNAc...) asparagine glycosylation is present at Asn-47. Cys-437 contributes to the heme binding site.

It belongs to the cytochrome P450 family. The cofactor is heme.

It is found in the membrane. It catalyses the reaction dauca-4,7-diene + 3 reduced [NADPH--hemoprotein reductase] + 3 O2 = asperaculane D + 3 oxidized [NADPH--hemoprotein reductase] + 4 H2O + 4 H(+). The protein operates within secondary metabolite biosynthesis. Cytochrome P450 monooxygenase; part of the gene cluster that mediates the biosynthesis of aculenes, a unique type of norsesquiterpenes that contain a nordaucane skeleton linked to an L-proline moiety and are of mixed biosynthetic origin. The pathway begins with the synthesis of dauca-4,7-diene by the terpene cyclase aneC using farnesyl pyrophosphate (FPP) as substrate. The cytochrome P450 monooxygenase aneF then performs the initial oxidation at C-12 of dauca-4,7-diene to yield asperaculane D. Asperaculane D is substrate of the cytochrome P450 monooxygenase aneD for C-10 hydroxylation to yield asperaculane E. The cytochrome P450 monooxygenase aneG then converts asperaculane E into aculene D via C-2 oxidation. The monomodular nonribosomal peptide synthtase aneB adenylates L-proline and the thiohydrolase aneE transfers this activated L-proline derivative to aculenes D and C to produce respectively aculenes B and A. The dioxygenase aneA converts aculene D into aculene C, and aculene B into aculene A by introducing the 5,6-alkene moiety. Asperculanes A, B, C and F, as well as 14-prolyl asperculane C, might be shunt products of the pathway. This chain is Cytochrome P450 monooxygenase aneF, found in Aspergillus aculeatus (strain ATCC 16872 / CBS 172.66 / WB 5094).